The following is a 619-amino-acid chain: Dihydroxy-acid dehydratase (619 aa).

Asp81 contacts Mg(2+). Cys122 is a [2Fe-2S] cluster binding site. Positions 123 and 124 each coordinate Mg(2+). Residue Lys124 is modified to N6-carboxylysine. Residue Cys195 coordinates [2Fe-2S] cluster. Residue Glu494 participates in Mg(2+) binding. Ser520 (proton acceptor) is an active-site residue.

The protein belongs to the IlvD/Edd family. As to quaternary structure, homodimer. It depends on [2Fe-2S] cluster as a cofactor. The cofactor is Mg(2+).

It carries out the reaction (2R)-2,3-dihydroxy-3-methylbutanoate = 3-methyl-2-oxobutanoate + H2O. The catalysed reaction is (2R,3R)-2,3-dihydroxy-3-methylpentanoate = (S)-3-methyl-2-oxopentanoate + H2O. Its pathway is amino-acid biosynthesis; L-isoleucine biosynthesis; L-isoleucine from 2-oxobutanoate: step 3/4. It functions in the pathway amino-acid biosynthesis; L-valine biosynthesis; L-valine from pyruvate: step 3/4. Its function is as follows. Functions in the biosynthesis of branched-chain amino acids. Catalyzes the dehydration of (2R,3R)-2,3-dihydroxy-3-methylpentanoate (2,3-dihydroxy-3-methylvalerate) into 2-oxo-3-methylpentanoate (2-oxo-3-methylvalerate) and of (2R)-2,3-dihydroxy-3-methylbutanoate (2,3-dihydroxyisovalerate) into 2-oxo-3-methylbutanoate (2-oxoisovalerate), the penultimate precursor to L-isoleucine and L-valine, respectively. The protein is Dihydroxy-acid dehydratase of Shewanella putrefaciens (strain CN-32 / ATCC BAA-453).